Reading from the N-terminus, the 425-residue chain is Protein CLP1 homolog (425 aa).

Residues glutamate 18, lysine 59, and 121 to 126 (DVGKST) each bind ATP.

The protein belongs to the Clp1 family. Clp1 subfamily.

Its subcellular location is the nucleus. In terms of biological role, required for endonucleolytic cleavage during polyadenylation-dependent pre-mRNA 3'-end formation. The sequence is that of Protein CLP1 homolog (cbc) from Drosophila ananassae (Fruit fly).